The following is a 138-amino-acid chain: Putative nickel-responsive regulator (138 aa).

The Ni(2+) site is built by histidine 78, histidine 89, histidine 91, and cysteine 97.

This sequence belongs to the transcriptional regulatory CopG/NikR family. The cofactor is Ni(2+).

Its function is as follows. Transcriptional regulator. This chain is Putative nickel-responsive regulator, found in Pyrococcus horikoshii (strain ATCC 700860 / DSM 12428 / JCM 9974 / NBRC 100139 / OT-3).